The chain runs to 952 residues: MSSGLWSQEKVTSPYWEERIFYLLLQECSVTDKQTQKLLKVPKGSIGQYIQDRSVGHSRVPSTKGKKNQIGLKILEQPHAVLFVDEKDVVEINEKFTELLLAITNCEERLSLFRNRLRLSKGLQVDVGSPVKVQLRSGEEKFPGVVRFRGPLLAERTVSGIFFGVELLEEGRGQGFTDGVYQGKQLFQCDEDCGVFVALDKLELIEDDDNGLESDFAGPGDTMQVEPPPLEINSRVSLKVGESTESGTVIFCDVLPGKESLGYFVGVDMDNPIGNWDGRFDGVQLCSFASVESTILLHINDIIPDSVTQERRPPKLAFMSRGVGDKGSSSHNKPKVTGSTSDPGSRNRSELFYTLNGSSVDSQQSKSKNPWYIDEVAEDPAKSLTEMSSDFGHSSPPPQPPSMNSLSSENRFHSLPFSLTKMPNTNGSMAHSPLSLSVQSVMGELNSTPVQESPPLPISSGNAHGLEVGSLAEVKENPPFYGVIRWIGQPPGLSDVLAGLELEDECAGCTDGTFRGTRYFTCALKKALFVKLKSCRPDSRFASLQPVSNQIERCNSLAFGGYLSEVVEENTPPKMEKEGLEIMIGKKKGIQGHYNSCYLDSTLFCLFAFSSALDTVLLRPKEKNDIEYYSETQELLRTEIVNPLRIYGYVCATKIMKLRKILEKVEAASGFTSEEKDPEEFLNILFHDILRVEPLLKIRSAGQKVQDCNFYQIFMEKNEKVGVPTIQQLLEWSFINSNLKFAEAPSCLIIQMPRFGKDFKLFKKIFPSLELNITDLLEDTPRQCRICGGLAMYECRECYDDPDISAGKIKQFCKTCSTQVHLHPRRLNHSYHPVSLPKDLPDWDWRHGCIPCQKMELFAVLCIETSHYVAFVKYGKDDSAWLFFDSMADRDGGQNGFNIPQVTPCPEVGEYLKMSLEDLHSLDSRRIQGCARRLLCDAYMCMYQSPTMSLYK.

The interval 106-589 (CEERLSLFRN…LEIMIGKKKG (484 aa)) is interaction with TRIP. 2 consecutive CAP-Gly domains span residues 153–198 (LAER…VFVA) and 253–286 (DVLPGKESLGYFVGVDMDNPIGNWDGRFDGVQLC). The tract at residues 311–350 (RRPPKLAFMSRGVGDKGSSSHNKPKVTGSTSDPGSRNRSE) is disordered. Residues 327–346 (GSSSHNKPKVTGSTSDPGSR) are compositionally biased toward polar residues. The residue at position 383 (Ser-383) is a Phosphoserine. Positions 386 to 409 (EMSSDFGHSSPPPQPPSMNSLSSE) are disordered. Residues 390–465 (DFGHSSPPPQ…LPISSGNAHG (76 aa)) are interaction with TRAF2. Phosphoserine occurs at positions 414 and 418. Residues 466-680 (LEVGSLAEVK…FTSEEKDPEE (215 aa)) are interaction with IKBKG/NEMO. The 44-residue stretch at 488–531 (GQPPGLSDVLAGLELEDECAGCTDGTFRGTRYFTCALKKALFVK) folds into the CAP-Gly 3 domain. A USP domain is found at 588 to 946 (KGIQGHYNSC…DAYMCMYQSP (359 aa)). Residue Cys-597 is the Nucleophile of the active site. Residues 777 to 829 (LEDTPRQCRICGGLAMYECRECYDDPDISAGKIKQFCKTCSTQVHLHPRRLNH) are B-box. Cys-784, Cys-787, Cys-795, Cys-798, Cys-813, Cys-816, His-821, and His-829 together coordinate Zn(2+). His-867 serves as the catalytic Proton acceptor.

The protein belongs to the peptidase C19 family. In terms of assembly, interacts (via CAP-Gly domain) with IKBKG/NEMO (via proline-rich C-terminal region). Interacts with TRAF2 and TRIP. Interacts with PLK1, DVL1, DVL3, MAVS, TBK1, IKKE and RIGI. Interacts (via CAP-Gly domain) with microtubules. Interacts with HDAC6 and BCL3. Interacts with MAP3K7. Identified in a complex with TRAF6 and SQSTM1. Interacts with OPTN and SQSTM1. Interacts with CEP350. Interacts with RNF31; the interaction is indirect and is mediated via SPATA2. Interacts with SPATA2 (via the PUB domain); the interaction is direct and recruits CYLD to the LUBAC complex, thereby regulating TNF-alpha-induced necroptosis. In terms of processing, phosphorylated on several serine residues by IKKA and/or IKKB in response to immune stimuli. Phosphorylation requires IKBKG. Phosphorylation abolishes TRAF2 deubiquitination, interferes with the activation of Jun kinases, and strongly reduces CD40-dependent gene activation by NF-kappa-B. Ubiquitinated. Polyubiquitinated in hepatocytes treated with palmitic acid. Ubiquitination is mediated by E3 ligase TRIM47 and leads to proteasomal degradation.

The protein localises to the cytoplasm. Its subcellular location is the perinuclear region. The protein resides in the cytoskeleton. It is found in the cell membrane. It localises to the microtubule organizing center. The protein localises to the centrosome. Its subcellular location is the spindle. The protein resides in the cilium basal body. It catalyses the reaction Thiol-dependent hydrolysis of ester, thioester, amide, peptide and isopeptide bonds formed by the C-terminal Gly of ubiquitin (a 76-residue protein attached to proteins as an intracellular targeting signal).. Deubiquitinase that specifically cleaves 'Lys-63'- and linear 'Met-1'-linked polyubiquitin chains and is involved in NF-kappa-B activation and TNF-alpha-induced necroptosis. Negatively regulates NF-kappa-B activation by deubiquitinating upstream signaling factors. Contributes to the regulation of cell survival, proliferation and differentiation via its effects on NF-kappa-B activation. Negative regulator of Wnt signaling. Inhibits HDAC6 and thereby promotes acetylation of alpha-tubulin and stabilization of microtubules. Plays a role in the regulation of microtubule dynamics, and thereby contributes to the regulation of cell proliferation, cell polarization, cell migration, and angiogenesis. Required for normal cell cycle progress and normal cytokinesis. Inhibits nuclear translocation of NF-kappa-B. Plays a role in the regulation of inflammation and the innate immune response, via its effects on NF-kappa-B activation. Dispensable for the maturation of intrathymic natural killer cells, but required for the continued survival of immature natural killer cells. Negatively regulates TNFRSF11A signaling and osteoclastogenesis. Involved in the regulation of ciliogenesis, allowing ciliary basal bodies to migrate and dock to the plasma membrane; this process does not depend on NF-kappa-B activation. Ability to remove linear ('Met-1'-linked) polyubiquitin chains regulates innate immunity and TNF-alpha-induced necroptosis: recruited to the LUBAC complex via interaction with SPATA2 and restricts linear polyubiquitin formation on target proteins. Regulates innate immunity by restricting linear polyubiquitin formation on RIPK2 in response to NOD2 stimulation. Involved in TNF-alpha-induced necroptosis by removing linear ('Met-1'-linked) polyubiquitin chains from RIPK1, thereby regulating the kinase activity of RIPK1. Negatively regulates intestinal inflammation by removing 'Lys-63' linked polyubiquitin chain of NLRP6, thereby reducing the interaction between NLRP6 and PYCARD/ASC and formation of the NLRP6 inflammasome. Does not catalyze deubiquitination of heterotypic 'Lys-63'-/'Lys-48'-linked branched ubiquitin chains. Removes 'Lys-63' linked polyubiquitin chain of MAP3K7, which inhibits phosphorylation and blocks downstream activation of the JNK-p38 kinase cascades. Also removes 'Lys-63'-linked polyubiquitin chains of MAP3K1 and MA3P3K3, which inhibit their interaction with MAP2K1 and MAP2K2. This Mus musculus (Mouse) protein is Ubiquitin carboxyl-terminal hydrolase CYLD (Cyld).